The sequence spans 2615 residues: Probable serine/threonine-protein kinase roco7 (2615 aa).

Residues 1–13 (MDGYSSLSSSGNS) show a composition bias toward low complexity. Disordered stretches follow at residues 1–35 (MDGYSSLSSSGNSIAPPRPTNNSVGGGSNSNNYNQ), 275–297 (STPTIITSSSSTTTPTNNNNSNN), 533–623 (QNIN…GGLN), and 946–998 (SSSS…ISEQ). Composition is skewed to low complexity over residues 533–560 (QNINQNNNNNNNQNCNSNTSSPIISSRS), 567–614 (NSST…NNNN), and 946–996 (SSSS…SNIS). Residues 1441 to 1631 (SVKEAYARNK…LCIWQNGMVL (191 aa)) form the COR domain. The Protein kinase domain occupies 1775–2042 (LKFGPQLGSG…ERLSTMQKTF (268 aa)). ATP-binding positions include 1781–1789 (LGSGSYANV) and lysine 1802. Aspartate 1899 acts as the Proton acceptor in catalysis. Disordered stretches follow at residues 2061–2158 (QINQ…SHSG) and 2176–2209 (GIGSGGNQHQQNGSSTPHSNSQSNSGSSSVYESG). 2 stretches are compositionally biased toward low complexity: residues 2073-2158 (SQAA…SHSG) and 2182-2209 (NQHQQNGSSTPHSNSQSNSGSSSVYESG). WD repeat units lie at residues 2491–2527 (GIIKKRLDGLASRVLSLLILDTYIIGACYDSTILVWD) and 2533–2574 (RMVQ…TTYS).

This sequence belongs to the protein kinase superfamily. TKL Ser/Thr protein kinase family. ROCO subfamily.

The enzyme catalyses L-seryl-[protein] + ATP = O-phospho-L-seryl-[protein] + ADP + H(+). It catalyses the reaction L-threonyl-[protein] + ATP = O-phospho-L-threonyl-[protein] + ADP + H(+). This Dictyostelium discoideum (Social amoeba) protein is Probable serine/threonine-protein kinase roco7 (roco7).